Consider the following 563-residue polypeptide: Dihydroxy-acid dehydratase (563 aa).

C50 contributes to the [2Fe-2S] cluster binding site. Residue D82 participates in Mg(2+) binding. A [2Fe-2S] cluster-binding site is contributed by C123. Mg(2+) is bound by residues D124 and K125. The residue at position 125 (K125) is an N6-carboxylysine. C195 is a [2Fe-2S] cluster binding site. E447 lines the Mg(2+) pocket. S473 functions as the Proton acceptor in the catalytic mechanism.

This sequence belongs to the IlvD/Edd family. As to quaternary structure, homodimer. [2Fe-2S] cluster serves as cofactor. The cofactor is Mg(2+).

It catalyses the reaction (2R)-2,3-dihydroxy-3-methylbutanoate = 3-methyl-2-oxobutanoate + H2O. It carries out the reaction (2R,3R)-2,3-dihydroxy-3-methylpentanoate = (S)-3-methyl-2-oxopentanoate + H2O. It functions in the pathway amino-acid biosynthesis; L-isoleucine biosynthesis; L-isoleucine from 2-oxobutanoate: step 3/4. It participates in amino-acid biosynthesis; L-valine biosynthesis; L-valine from pyruvate: step 3/4. In terms of biological role, functions in the biosynthesis of branched-chain amino acids. Catalyzes the dehydration of (2R,3R)-2,3-dihydroxy-3-methylpentanoate (2,3-dihydroxy-3-methylvalerate) into 2-oxo-3-methylpentanoate (2-oxo-3-methylvalerate) and of (2R)-2,3-dihydroxy-3-methylbutanoate (2,3-dihydroxyisovalerate) into 2-oxo-3-methylbutanoate (2-oxoisovalerate), the penultimate precursor to L-isoleucine and L-valine, respectively. This chain is Dihydroxy-acid dehydratase, found in Nostoc sp. (strain PCC 7120 / SAG 25.82 / UTEX 2576).